Consider the following 169-residue polypeptide: Acetolactate synthase small subunit (169 aa).

In terms of domain architecture, ACT spans 8 to 85; it reads TLSVLVEDTP…KVVEQEADNS (78 aa).

Belongs to the acetolactate synthase small subunit family. As to quaternary structure, dimer of large and small chains.

It catalyses the reaction 2 pyruvate + H(+) = (2S)-2-acetolactate + CO2. It functions in the pathway amino-acid biosynthesis; L-isoleucine biosynthesis; L-isoleucine from 2-oxobutanoate: step 1/4. The protein operates within amino-acid biosynthesis; L-valine biosynthesis; L-valine from pyruvate: step 1/4. The protein is Acetolactate synthase small subunit (ilvH) of Mycobacterium leprae (strain TN).